A 157-amino-acid chain; its full sequence is UPF0254 protein MTH_1148 (157 aa).

The protein belongs to the UPF0254 family.

The polypeptide is UPF0254 protein MTH_1148 (Methanothermobacter thermautotrophicus (strain ATCC 29096 / DSM 1053 / JCM 10044 / NBRC 100330 / Delta H) (Methanobacterium thermoautotrophicum)).